Reading from the N-terminus, the 307-residue chain is Serine/threonine-protein phosphatase 4 catalytic subunit (307 aa).

Position 2 is an N-acetylalanine (A2). Mn(2+) is bound by residues D54, H56, D82, and N114. The active-site Proton donor is H115. Mn(2+) is bound by residues H164 and H238. L307 carries the post-translational modification Leucine methyl ester.

This sequence belongs to the PPP phosphatase family. PP-4 (PP-X) subfamily. As to quaternary structure, serine/threonine-protein phosphatase 4 (PP4) occurs in different assemblies of the catalytic and one or more regulatory subunits. Component of the PP4 complexes PPP4C-PPP4R1, PPP4C-PPP4R2, PPP4C-PPP4R2-PPP4R3A, PPP4C-PPP4R2-PPP4R3B and PPP4C-PPP4R4. The PPP4C-PPP4R2 complex appears to be a tetramer composed of 2 molecules of PPP4C and 2 molecules of PPP4R2. Interacts with REL, NFKB1/p50 and RELA. Interacts with SMN1 and GEMIN4. Interacts with IRS4 (phosphorylated). Interacts with SMEK1/PPP4R3A; the interaction requires PP4R2. Interacts with HDAC3. Mn(2+) is required as a cofactor. In terms of processing, methylation at the C-terminal Leu-307 is critical for interactions with regulatory subunits and functions in DNA repair.

It is found in the cytoplasm. Its subcellular location is the nucleus. The protein resides in the cytoskeleton. It localises to the microtubule organizing center. The protein localises to the centrosome. The enzyme catalyses O-phospho-L-seryl-[protein] + H2O = L-seryl-[protein] + phosphate. It carries out the reaction O-phospho-L-threonyl-[protein] + H2O = L-threonyl-[protein] + phosphate. Its function is as follows. Protein phosphatase that is involved in many processes such as microtubule organization at centrosomes, maturation of spliceosomal snRNPs, apoptosis, DNA repair, tumor necrosis factor (TNF)-alpha signaling, activation of c-Jun N-terminal kinase MAPK8, regulation of histone acetylation, DNA damage checkpoint signaling, NF-kappa-B activation and cell migration. The PPP4C-PPP4R1 PP4 complex may play a role in dephosphorylation and regulation of HDAC3. The PPP4C-PPP4R2-PPP4R3A PP4 complex specifically dephosphorylates H2AX phosphorylated on Ser-140 (gamma-H2AX) generated during DNA replication and required for DNA DSB repair. Dephosphorylates NDEL1 at CDK1 phosphorylation sites and negatively regulates CDK1 activity in interphase. In response to DNA damage, catalyzes RPA2 dephosphorylation, an essential step for DNA repair since it allows the efficient RPA2-mediated recruitment of RAD51 to chromatin. This is Serine/threonine-protein phosphatase 4 catalytic subunit (PPP4C) from Oryctolagus cuniculus (Rabbit).